Here is a 160-residue protein sequence, read N- to C-terminus: Small ribosomal subunit protein uS9 (160 aa).

Over residues 1–18 (MTDTSNSLQDLGTLTGAP) the composition is skewed to polar residues. Residues 1–37 (MTDTSNSLQDLGTLTGAPSAQPVKSVEPKIDAQGRAY) are disordered.

This sequence belongs to the universal ribosomal protein uS9 family.

This chain is Small ribosomal subunit protein uS9, found in Hyphomonas neptunium (strain ATCC 15444).